The sequence spans 297 residues: Phosphoribosylaminoimidazole-succinocarboxamide synthase (297 aa).

It belongs to the SAICAR synthetase family.

It carries out the reaction 5-amino-1-(5-phospho-D-ribosyl)imidazole-4-carboxylate + L-aspartate + ATP = (2S)-2-[5-amino-1-(5-phospho-beta-D-ribosyl)imidazole-4-carboxamido]succinate + ADP + phosphate + 2 H(+). Its pathway is purine metabolism; IMP biosynthesis via de novo pathway; 5-amino-1-(5-phospho-D-ribosyl)imidazole-4-carboxamide from 5-amino-1-(5-phospho-D-ribosyl)imidazole-4-carboxylate: step 1/2. The sequence is that of Phosphoribosylaminoimidazole-succinocarboxamide synthase (purC) from Mycobacterium leprae (strain TN).